The sequence spans 533 residues: Phosphatidylinositol 4-kinase gamma 8 (533 aa).

The PI3K/PI4K catalytic domain maps to 101-397 (GAQPLLLPSG…AVSGSDDDDD (297 aa)). Residues 107–113 (LPSGLGG) form a G-loop region. Residues 108 to 114 (PSGLGGA), K129, and 210 to 213 (QRFV) each bind ATP. Positions 243-251 (LNLDRHAGN) are catalytic loop. The interval 276–302 (PIDHGLCLPECLDDPYFEWLNWPQASV) is activation loop. ATP is bound at residue D278.

Belongs to the PI3/PI4-kinase family. Type II PI4K subfamily.

It catalyses the reaction a 1,2-diacyl-sn-glycero-3-phospho-(1D-myo-inositol) + ATP = a 1,2-diacyl-sn-glycero-3-phospho-(1D-myo-inositol 4-phosphate) + ADP + H(+). The phosphorylation of phosphatidylinositol (PI) to PI4P is the first committed step in the generation of phosphatidylinositol 4,5-bisphosphate (PIP2), a precursor of the second messenger inositol 1,4,5-trisphosphate (InsP3). The polypeptide is Phosphatidylinositol 4-kinase gamma 8 (PI4KG8) (Arabidopsis thaliana (Mouse-ear cress)).